The following is a 551-amino-acid chain: HTH-type transcriptional regulator SgrR (551 aa).

One can recognise an HTH marR-type domain in the interval 1 to 116; sequence MPSARLQQQF…LVSHLGRSFR (116 aa). The segment at residues 26-49 is a DNA-binding region (H-T-H motif); the sequence is LNELAALLSCSRRHMRTLLNTMQD. The tract at residues 163 to 492 is solute-binding; sequence ELEADIAHHW…IDWQADAARW (330 aa).

Its function is as follows. Activates the small RNA gene sgrS under glucose-phosphate stress conditions as well as yfdZ. Represses its own transcription under both stress and non-stress conditions. Might act as a sensor of the intracellular accumulation of phosphoglucose by binding these molecules in its C-terminal solute-binding domain. The polypeptide is HTH-type transcriptional regulator SgrR (Shigella boydii serotype 4 (strain Sb227)).